Here is a 230-residue protein sequence, read N- to C-terminus: A-type ATP synthase subunit D (230 aa).

The tract at residues 204-230 (AKKEEEEDALAAEEEAEEEPEAVTADD) is disordered. The segment covering 208 to 230 (EEEDALAAEEEAEEEPEAVTADD) has biased composition (acidic residues).

The protein belongs to the V-ATPase D subunit family. In terms of assembly, has multiple subunits with at least A(3), B(3), C, D, E, F, H, I and proteolipid K(x).

It localises to the cell membrane. Functionally, component of the A-type ATP synthase that produces ATP from ADP in the presence of a proton gradient across the membrane. This Haloarcula marismortui (strain ATCC 43049 / DSM 3752 / JCM 8966 / VKM B-1809) (Halobacterium marismortui) protein is A-type ATP synthase subunit D.